A 63-amino-acid polypeptide reads, in one-letter code: Cecropin-A2 (63 aa).

The first 23 residues, 1-23, serve as a signal peptide directing secretion; sequence MNFYNIFVFVALILAITIGQSEA. Arginine 62 bears the Arginine amide mark.

The protein belongs to the cecropin family. In terms of tissue distribution, strongly expressed in larval, pupal and adult fat body and hemocytes after injection of bacteria. Maximal expression in the adult involves fat body cells of the head, thorax and abdomen.

It is found in the secreted. In terms of biological role, cecropins have lytic and antibacterial activity against several Gram-positive and Gram-negative bacteria. This is Cecropin-A2 from Drosophila melanogaster (Fruit fly).